The chain runs to 257 residues: Aspartate/glutamate leucyltransferase (257 aa).

The protein belongs to the R-transferase family. Bpt subfamily.

The protein resides in the cytoplasm. The enzyme catalyses N-terminal L-glutamyl-[protein] + L-leucyl-tRNA(Leu) = N-terminal L-leucyl-L-glutamyl-[protein] + tRNA(Leu) + H(+). It catalyses the reaction N-terminal L-aspartyl-[protein] + L-leucyl-tRNA(Leu) = N-terminal L-leucyl-L-aspartyl-[protein] + tRNA(Leu) + H(+). Functions in the N-end rule pathway of protein degradation where it conjugates Leu from its aminoacyl-tRNA to the N-termini of proteins containing an N-terminal aspartate or glutamate. The chain is Aspartate/glutamate leucyltransferase from Nitrobacter winogradskyi (strain ATCC 25391 / DSM 10237 / CIP 104748 / NCIMB 11846 / Nb-255).